A 369-amino-acid chain; its full sequence is Type 2 DNA topoisomerase 6 subunit A (369 aa).

Residues 10–146 (KPREIAKQKI…LGFIPEEDGS (137 aa)) enclose the Topo IIA-type catalytic domain. Tyr103 serves as the catalytic O-(5'-phospho-DNA)-tyrosine intermediate. Residues Glu197 and Asp249 each contribute to the Mg(2+) site.

The protein belongs to the TOP6A family. Homodimer. Heterotetramer of two Top6A and two Top6B chains. Requires Mg(2+) as cofactor.

It catalyses the reaction ATP-dependent breakage, passage and rejoining of double-stranded DNA.. Functionally, relaxes both positive and negative superturns and exhibits a strong decatenase activity. The sequence is that of Type 2 DNA topoisomerase 6 subunit A from Methanocaldococcus jannaschii (strain ATCC 43067 / DSM 2661 / JAL-1 / JCM 10045 / NBRC 100440) (Methanococcus jannaschii).